The chain runs to 335 residues: Olfactory receptor 9K2 (335 aa).

Residues 1–50 (MLGSKPRVHLYILPCASQQVSTMGDRGTSNHSEMTDFILAGFRVRPELHI) are Extracellular-facing. A glycan (N-linked (GlcNAc...) asparagine) is linked at asparagine 30. Residues 51–71 (LLFLLFLFVYAMILLGNVGMM) traverse the membrane as a helical segment. Topologically, residues 72–79 (TIIMTDPR) are cytoplasmic. Residues 80–100 (LNTPMYFFLGNLSFIDLFYSS) form a helical membrane-spanning segment. The Extracellular segment spans residues 101–124 (VIEPKAMINFWSENKSISFAGCVA). An N-linked (GlcNAc...) asparagine glycan is attached at asparagine 114. Cysteine 122 and cysteine 214 form a disulfide bridge. The helical transmembrane segment at 125–145 (QLFLFALLIVTEGFLLAAMAY) threads the bilayer. The Cytoplasmic portion of the chain corresponds to 146–164 (DRFIAICNPLLYSVQMSTR). The chain crosses the membrane as a helical span at residues 165–185 (LCTQLVAGSYFCGCISSVIQT). The Extracellular segment spans residues 186-222 (SMTFTLSFCASRAVDHFYCDSRPLQRLSCSDLFIHRM). A helical membrane pass occupies residues 223–242 (ISFSLSCIIILPTIIVIIVS). The Cytoplasmic portion of the chain corresponds to 243 to 262 (YMYIVSTVLKIHSTEGHKKA). A helical transmembrane segment spans residues 263-283 (FSTCSSHLGVVSVLYGAVFFM). At 284 to 296 (YLTPDRFPELSKV) the chain is on the extracellular side. Residues 316–335 (RNKDVQEALKKFLEKKNIIL) are Cytoplasmic-facing.

This sequence belongs to the G-protein coupled receptor 1 family.

The protein localises to the cell membrane. In terms of biological role, odorant receptor. The sequence is that of Olfactory receptor 9K2 (OR9K2) from Homo sapiens (Human).